The following is a 516-amino-acid chain: Protein BTN1 (516 aa).

8 consecutive transmembrane segments (helical) span residues 24–44 (LFAAFMIFGLLNNVLYVIILS), 57–77 (GVVALFNIFPALITKVVWPLL), 88–108 (VGFCTICSWFGIITIALSSSL), 112–132 (LLGISLASLSSGMGELTFLQL), 146–166 (LGAWSSGTGFAGVAGAGIWWL), 169–189 (GLGVKGGLGLSSFLPLFFPIT), 371–391 (PAIIQFLVLSLLFLQAKTFFF), and 409–429 (SITIVFLLICLEGLCGGSGYV).

The protein belongs to the battenin family.

The protein localises to the vacuole membrane. Functionally, involved in vacuolar transport and vacuole pH homeostasis. Also required for cytokinesis. The protein is Protein BTN1 (BTN1) of Cryptococcus neoformans var. neoformans serotype D (strain JEC21 / ATCC MYA-565) (Filobasidiella neoformans).